A 315-amino-acid polypeptide reads, in one-letter code: Peroxidase 4 (315 aa).

The signal sequence occupies residues 1-19 (MAIFKILVLLLSLCCFSQA). A Pyrrolidone carboxylic acid modification is found at Gln-20. 4 disulfide bridges follow: Cys-30-Cys-110, Cys-63-Cys-68, Cys-116-Cys-311, and Cys-195-Cys-221. His-61 functions as the Proton acceptor in the catalytic mechanism. Residues Asp-62, Val-65, Gly-67, Asp-69, and Ser-71 each coordinate Ca(2+). Pro-158 provides a ligand contact to substrate. His-188 lines the heme b pocket. Position 189 (Thr-189) interacts with Ca(2+). A glycan (N-linked (GlcNAc...) asparagine) is linked at Asn-205. Residues Asp-234, Thr-237, and Asp-242 each contribute to the Ca(2+) site.

It belongs to the peroxidase family. Classical plant (class III) peroxidase subfamily. The cofactor is heme b. Requires Ca(2+) as cofactor.

It is found in the secreted. The catalysed reaction is 2 a phenolic donor + H2O2 = 2 a phenolic radical donor + 2 H2O. Removal of H(2)O(2), oxidation of toxic reductants, biosynthesis and degradation of lignin, suberization, auxin catabolism, response to environmental stresses such as wounding, pathogen attack and oxidative stress. These functions might be dependent on each isozyme/isoform in each plant tissue. The chain is Peroxidase 4 (PER4) from Arabidopsis thaliana (Mouse-ear cress).